Reading from the N-terminus, the 2457-residue chain is Large tegument protein deneddylase (2457 aa).

Residues 1 to 234 (MALPASLAGF…SDLHGSKIIL (234 aa)) form a deubiquitination activity region. Positions 13–224 (EGTASTNQAD…IMSHYKVISF (212 aa)) constitute a Peptidase C76 domain. Catalysis depends on residues Cys-33, Asp-163, and His-165. Disordered stretches follow at residues 281–350 (EEWT…LPSV), 2064–2131 (ITEG…PIIP), 2164–2360 (GHSG…PQPQ), and 2387–2407 (GMSDDKNPEPCVKENPPGVTH). Over residues 293–302 (SGRTPPEKMT) the composition is skewed to basic and acidic residues. The segment covering 314–334 (TMDDDVIDLTGDDDMEDESEG) has biased composition (acidic residues). Residues 2080–2091 (TQDHMEEPDNKQ) are compositionally biased toward basic and acidic residues. Pro residues predominate over residues 2115-2131 (SPSPSPPVLTPIKPIIP). A compositionally biased stretch (polar residues) spans 2173–2186 (HIQSSTPGPAQNTR). Basic and acidic residues predominate over residues 2387–2398 (GMSDDKNPEPCV).

It belongs to the herpesviridae large tegument protein family. As to quaternary structure, interacts with host CUL1 and CUL4A; these interactions inhibit the E3 ligase activity of cullins. Interacts with inner tegument protein. Interacts with capsid vertex specific component CVC2. Interacts with the major capsid protein/MCP.

Its subcellular location is the virion tegument. The protein resides in the host cytoplasm. It localises to the host nucleus. It catalyses the reaction Thiol-dependent hydrolysis of ester, thioester, amide, peptide and isopeptide bonds formed by the C-terminal Gly of ubiquitin (a 76-residue protein attached to proteins as an intracellular targeting signal).. In terms of biological role, large tegument protein that plays multiple roles in the viral cycle. During viral entry, remains associated with the capsid while most of the tegument is detached and participates in the capsid transport toward the host nucleus. Plays a role in the routing of the capsid at the nuclear pore complex and subsequent uncoating. Within the host nucleus, acts as a deneddylase and promotes the degradation of nuclear CRLs (cullin-RING ubiquitin ligases) and thereby stabilizes nuclear CRL substrates, while cytoplasmic CRLs remain unaffected. These modifications prevent host cell cycle S-phase progression and create a favorable environment allowing efficient viral genome replication. Participates later in the secondary envelopment of capsids. Indeed, plays a linker role for the association of the outer viral tegument to the capsids together with the inner tegument protein. This is Large tegument protein deneddylase from Apodemus sylvaticus (European woodmouse).